A 389-amino-acid chain; its full sequence is ATP-dependent (S)-NAD(P)H-hydrate dehydratase (389 aa).

A YjeF C-terminal domain is found at 53–389 (TLQLVRNIIP…RGGGRLPQAL (337 aa)). Position 85 is a phosphotyrosine (Tyr-85). (6S)-NADPHX contacts are provided by residues Glu-153 and 205–211 (NHMEFSR). ATP-binding positions include 245-249 (KGERD) and 264-273 (GSSRRCGGQG). Asp-274 provides a ligand contact to (6S)-NADPHX. Disordered regions lie at residues 316–350 (KTRA…PGGC) and 369–389 (RSLH…PQAL).

It belongs to the NnrD/CARKD family. Requires Mg(2+) as cofactor.

It localises to the mitochondrion. It catalyses the reaction (6S)-NADHX + ATP = ADP + phosphate + NADH + H(+). The enzyme catalyses (6S)-NADPHX + ATP = ADP + phosphate + NADPH + H(+). In terms of biological role, catalyzes the dehydration of the S-form of NAD(P)HX at the expense of ATP, which is converted to ADP. Together with NAD(P)HX epimerase, which catalyzes the epimerization of the S- and R-forms, the enzyme allows the repair of both epimers of NAD(P)HX, a damaged form of NAD(P)H that is a result of enzymatic or heat-dependent hydration. The sequence is that of ATP-dependent (S)-NAD(P)H-hydrate dehydratase from Macaca mulatta (Rhesus macaque).